The chain runs to 445 residues: uncharacterized protein (445 aa).

This is an uncharacterized protein from Acanthamoeba polyphaga mimivirus (APMV).